The chain runs to 332 residues: Tetraacyldisaccharide 4'-kinase (332 aa).

60-67 contributes to the ATP binding site; that stretch reads TVGGTGKT.

This sequence belongs to the LpxK family.

It carries out the reaction a lipid A disaccharide + ATP = a lipid IVA + ADP + H(+). The protein operates within glycolipid biosynthesis; lipid IV(A) biosynthesis; lipid IV(A) from (3R)-3-hydroxytetradecanoyl-[acyl-carrier-protein] and UDP-N-acetyl-alpha-D-glucosamine: step 6/6. Functionally, transfers the gamma-phosphate of ATP to the 4'-position of a tetraacyldisaccharide 1-phosphate intermediate (termed DS-1-P) to form tetraacyldisaccharide 1,4'-bis-phosphate (lipid IVA). The protein is Tetraacyldisaccharide 4'-kinase of Pseudomonas aeruginosa (strain LESB58).